A 185-amino-acid chain; its full sequence is MDLKVFDGQDKSELSMIEVAHAILAHHGKAMAFVDLTNEVQQYLGKSDEEIRERLAQFYTDLNVDGSFISLGDNTWGLRAWYPFESIDEATVGENEEDEEDDRPKKKRRKVNAFLADTDDDDDVIDYDNDDPEDEDLDTDDDADSEDDYDDDTDDFSDDDDDLDDGIEGQLSELHDEEDEDEDDE.

One can recognise an HTH HARE-type domain in the interval 14 to 81 (LSMIEVAHAI…GDNTWGLRAW (68 aa)). The interval 90 to 185 (ATVGENEEDE…DEEDEDEDDE (96 aa)) is disordered. Acidic residues-rich tracts occupy residues 117 to 167 (DTDD…DDGI) and 175 to 185 (HDEEDEDEDDE).

Belongs to the RpoE family. In terms of assembly, RNAP is composed of a core of 2 alpha, a beta and a beta' subunits. The core is associated with a delta subunit and one of several sigma factors.

Functionally, participates in both the initiation and recycling phases of transcription. In the presence of the delta subunit, RNAP displays an increased specificity of transcription, a decreased affinity for nucleic acids, and an increased efficiency of RNA synthesis because of enhanced recycling. The polypeptide is Probable DNA-directed RNA polymerase subunit delta (Limosilactobacillus reuteri (strain DSM 20016) (Lactobacillus reuteri)).